The following is a 116-amino-acid chain: Large ribosomal subunit protein bL19 (116 aa).

It belongs to the bacterial ribosomal protein bL19 family.

Functionally, this protein is located at the 30S-50S ribosomal subunit interface and may play a role in the structure and function of the aminoacyl-tRNA binding site. In Histophilus somni (strain 129Pt) (Haemophilus somnus), this protein is Large ribosomal subunit protein bL19.